Here is a 127-residue protein sequence, read N- to C-terminus: Small ribosomal subunit protein uS12 (127 aa).

Positions 11 to 20 (GRKPKKKKSK) are enriched in basic residues. The disordered stretch occupies residues 11–30 (GRKPKKKKSKAPALQGNPQK). Aspartate 89 is modified (3-methylthioaspartic acid). Positions 105-127 (AGVEGRRQSRSKYGAKRPKDQKK) are disordered. Residues 112–127 (QSRSKYGAKRPKDQKK) show a composition bias toward basic residues.

The protein belongs to the universal ribosomal protein uS12 family. Part of the 30S ribosomal subunit. Contacts proteins S8 and S17. May interact with IF1 in the 30S initiation complex.

With S4 and S5 plays an important role in translational accuracy. In terms of biological role, interacts with and stabilizes bases of the 16S rRNA that are involved in tRNA selection in the A site and with the mRNA backbone. Located at the interface of the 30S and 50S subunits, it traverses the body of the 30S subunit contacting proteins on the other side and probably holding the rRNA structure together. The combined cluster of proteins S8, S12 and S17 appears to hold together the shoulder and platform of the 30S subunit. This Thermotoga maritima (strain ATCC 43589 / DSM 3109 / JCM 10099 / NBRC 100826 / MSB8) protein is Small ribosomal subunit protein uS12.